A 506-amino-acid chain; its full sequence is MEFFTEYGEASQYQIQEVVGKGSYGVVAAAVDTHTGERVAIKKINDVFEHVSDAIRILREIKVLRLLRHPDIVVIKHIMLPPTRREFRDIYVVFELMESDLHQVIEANHDLSPEHHRFFLYQLLCALKYIHSANVFHRDLKPKNILANSDCKLKICDFGLARVAFNDSPSTIFWTDYVATRWYRAPELCGSFFSKYTPAIDIWSIGCIFAEILTGRPLFPGRNVVHQLDLITDLLGTPSSETLSRIRNENARGYLTGMQRKHPIPFSHKFHNADPLALRLLERLLAFDPKDRPTAEEALADPYFRGISKLSREPSRLPVSKFEFEFERRKLTKDDVREMIYREILEYHPQMLQEYIRGGEQISFLYPSGVDRFKRQFAHLEENYSRGERSTPLRRQHASLPRERVCSSVDSNNQDSDNEERRAISSIARTMISPPRSQEKGKNRASAYPNGIINLNSNPKIYLKSASISASTCIIRGNKGPKENGISEDMEEVVYELSDNVTRMLS.

One can recognise a Protein kinase domain in the interval 13–304 (YQIQEVVGKG…AEEALADPYF (292 aa)). ATP is bound by residues 19-27 (VGKGSYGVV) and lysine 42. The active-site Proton acceptor is the aspartate 139. Residue threonine 175 is modified to Phosphothreonine. The TXY signature appears at 175 to 177 (TDY). Phosphotyrosine is present on tyrosine 177. Positions 384–421 (YSRGERSTPLRRQHASLPRERVCSSVDSNNQDSDNEER) are disordered.

Belongs to the protein kinase superfamily. CMGC Ser/Thr protein kinase family. MAP kinase subfamily. In terms of processing, dually phosphorylated on Thr-175 and Tyr-177, which activates the enzyme.

It catalyses the reaction L-seryl-[protein] + ATP = O-phospho-L-seryl-[protein] + ADP + H(+). The catalysed reaction is L-threonyl-[protein] + ATP = O-phospho-L-threonyl-[protein] + ADP + H(+). Activated by threonine and tyrosine phosphorylation. In Oryza sativa subsp. indica (Rice), this protein is Mitogen-activated protein kinase 13 (MPK13).